The primary structure comprises 159 residues: SsrA-binding protein (159 aa).

This sequence belongs to the SmpB family.

The protein resides in the cytoplasm. In terms of biological role, required for rescue of stalled ribosomes mediated by trans-translation. Binds to transfer-messenger RNA (tmRNA), required for stable association of tmRNA with ribosomes. tmRNA and SmpB together mimic tRNA shape, replacing the anticodon stem-loop with SmpB. tmRNA is encoded by the ssrA gene; the 2 termini fold to resemble tRNA(Ala) and it encodes a 'tag peptide', a short internal open reading frame. During trans-translation Ala-aminoacylated tmRNA acts like a tRNA, entering the A-site of stalled ribosomes, displacing the stalled mRNA. The ribosome then switches to translate the ORF on the tmRNA; the nascent peptide is terminated with the 'tag peptide' encoded by the tmRNA and targeted for degradation. The ribosome is freed to recommence translation, which seems to be the essential function of trans-translation. This is SsrA-binding protein from Coxiella burnetii (strain RSA 493 / Nine Mile phase I).